We begin with the raw amino-acid sequence, 396 residues long: Protein Njmu-R1 (396 aa).

The disordered stretch occupies residues 1 to 78 (MLPSLQESMD…SGDDFSLSLA (78 aa)). Ser8 and Ser18 each carry phosphoserine. The span at 9–24 (MDGDEKELESSEEGGS) shows a compositional bias: acidic residues. Positions 58-67 (GSPSGTNAET) are enriched in polar residues.

Component of the complex WDR11 composed of C17orf75, FAM91A1 and WDR11; FAM91A1 and WDR11 are required for proper location of the complex. Interacts with TBC1D23; this interaction may be indirect and recruits TBC1D23 to AP-1-derived vesicles. Highly expressed in testis and also expressed in fetal testis.

It localises to the golgi apparatus. It is found in the trans-Golgi network. The protein resides in the cytoplasmic vesicle. As component of the WDR11 complex acts together with TBC1D23 to facilitate the golgin-mediated capture of vesicles generated using AP-1. May have a role in spermatogenesis. The sequence is that of Protein Njmu-R1 (C17orf75) from Homo sapiens (Human).